We begin with the raw amino-acid sequence, 321 residues long: Porphobilinogen deaminase (321 aa).

Residue Cys243 is modified to S-(dipyrrolylmethanemethyl)cysteine.

Belongs to the HMBS family. Monomer. The cofactor is dipyrromethane.

It catalyses the reaction 4 porphobilinogen + H2O = hydroxymethylbilane + 4 NH4(+). The protein operates within porphyrin-containing compound metabolism; protoporphyrin-IX biosynthesis; coproporphyrinogen-III from 5-aminolevulinate: step 2/4. Its function is as follows. Tetrapolymerization of the monopyrrole PBG into the hydroxymethylbilane pre-uroporphyrinogen in several discrete steps. The polypeptide is Porphobilinogen deaminase (Histophilus somni (strain 129Pt) (Haemophilus somnus)).